The sequence spans 452 residues: Growth/differentiation factor 6 (452 aa).

Positions 1-22 (MDTPRVLLWAIFLISFLWDLPG) are cleaved as a signal peptide. Residues 23 to 332 (FQQASISSSS…LPSPGRRRRR (310 aa)) constitute a propeptide that is removed on maturation. Residues 29-93 (SSSSSTELDS…QEPPGRGPRV (65 aa)) are disordered. Basic and acidic residues-rich tracts occupy residues 37–46 (DSTKDVENRK) and 58–75 (AEGR…ELRR). Residue Asn-115 is glycosylated (N-linked (GlcNAc...) asparagine). 2 disordered regions span residues 244 to 267 (RDSG…LGFG) and 301 to 348 (AEAA…KKSR). Residues 301–317 (AEAAGAEGSWPAPSGAP) are compositionally biased toward low complexity. Over residues 327–348 (GRRRRRTALSSRHGKRHGKKSR) the composition is skewed to basic residues. 3 cysteine pairs are disulfide-bonded: Cys-351-Cys-417, Cys-380-Cys-449, and Cys-384-Cys-451.

This sequence belongs to the TGF-beta family. Homodimer; disulfide-linked.

Its subcellular location is the secreted. Functionally, growth factor that controls proliferation and cellular differentiation in the retina and bone formation. Plays a key role in regulating apoptosis during retinal development. Establishes dorsal-ventral positional information in the retina and controls the formation of the retinotectal map. Required for normal formation of bones and joints in the limbs, skull, digits and axial skeleton. Plays a key role in establishing boundaries between skeletal elements during development. Regulation of GDF6 expression seems to be a mechanism for evolving species-specific changes in skeletal structures. Seems to positively regulate differentiation of chondrogenic tissue through the growth factor receptors subunits BMPR1A, BMPR1B, BMPR2 and ACVR2A, leading to the activation of SMAD1-SMAD5-SMAD8 complex. The regulation of chondrogenic differentiation is inhibited by NOG. Also involved in the induction of adipogenesis from mesenchymal stem cells. This mechanism acts through the growth factor receptors subunits BMPR1A, BMPR2 and ACVR2A and the activation of SMAD1-SMAD5-SMAD8 complex and MAPK14/p38. This chain is Growth/differentiation factor 6 (Gdf6), found in Rattus norvegicus (Rat).